Reading from the N-terminus, the 1242-residue chain is ATP-dependent helicase/nuclease subunit A (1242 aa).

The UvrD-like helicase ATP-binding domain maps to 12–487; that stretch reads SRWTDEQWKA…IDLASNFRSR (476 aa). Residue 33-40 coordinates ATP; that stretch reads AAAGSGKT. A UvrD-like helicase C-terminal domain is found at 514–808; it reads AAQLKYGADY…RVMTIHSSKG (295 aa).

This sequence belongs to the helicase family. AddA subfamily. Heterodimer of AddA and AddB/RexB. The cofactor is Mg(2+).

It catalyses the reaction Couples ATP hydrolysis with the unwinding of duplex DNA by translocating in the 3'-5' direction.. The catalysed reaction is ATP + H2O = ADP + phosphate + H(+). Its function is as follows. The heterodimer acts as both an ATP-dependent DNA helicase and an ATP-dependent, dual-direction single-stranded exonuclease. Recognizes the chi site generating a DNA molecule suitable for the initiation of homologous recombination. The AddA nuclease domain is required for chi fragment generation; this subunit has the helicase and 3' -&gt; 5' nuclease activities. This is ATP-dependent helicase/nuclease subunit A from Geobacillus thermodenitrificans (strain NG80-2).